The chain runs to 242 residues: Uridylate kinase (242 aa).

16–19 (KVSG) provides a ligand contact to ATP. Gly58 serves as a coordination point for UMP. 2 residues coordinate ATP: Gly59 and Arg63. UMP is bound by residues Asp78 and 139 to 146 (TGNPFCTT). 4 residues coordinate ATP: Thr166, Gln167, Tyr172, and Asp175.

It belongs to the UMP kinase family. Homohexamer.

It localises to the cytoplasm. It carries out the reaction UMP + ATP = UDP + ADP. It functions in the pathway pyrimidine metabolism; CTP biosynthesis via de novo pathway; UDP from UMP (UMPK route): step 1/1. Inhibited by UTP. Functionally, catalyzes the reversible phosphorylation of UMP to UDP. This is Uridylate kinase from Rickettsia conorii (strain ATCC VR-613 / Malish 7).